The following is a 295-amino-acid chain: 4-hydroxy-tetrahydrodipicolinate synthase (295 aa).

Thr46 provides a ligand contact to pyruvate. Residue Tyr134 is the Proton donor/acceptor of the active site. Residue Lys162 is the Schiff-base intermediate with substrate of the active site. Ile205 provides a ligand contact to pyruvate.

It belongs to the DapA family. As to quaternary structure, homotetramer; dimer of dimers.

It is found in the cytoplasm. The enzyme catalyses L-aspartate 4-semialdehyde + pyruvate = (2S,4S)-4-hydroxy-2,3,4,5-tetrahydrodipicolinate + H2O + H(+). Its pathway is amino-acid biosynthesis; L-lysine biosynthesis via DAP pathway; (S)-tetrahydrodipicolinate from L-aspartate: step 3/4. In terms of biological role, catalyzes the condensation of (S)-aspartate-beta-semialdehyde [(S)-ASA] and pyruvate to 4-hydroxy-tetrahydrodipicolinate (HTPA). This chain is 4-hydroxy-tetrahydrodipicolinate synthase, found in Anaeromyxobacter dehalogenans (strain 2CP-C).